The sequence spans 103 residues: Large ribosomal subunit protein bL21 (103 aa).

The protein belongs to the bacterial ribosomal protein bL21 family. In terms of assembly, part of the 50S ribosomal subunit. Contacts protein L20.

Functionally, this protein binds to 23S rRNA in the presence of protein L20. This is Large ribosomal subunit protein bL21 from Azotobacter vinelandii (strain DJ / ATCC BAA-1303).